The chain runs to 305 residues: UDP-3-O-acyl-N-acetylglucosamine deacetylase (305 aa).

3 residues coordinate Zn(2+): His-79, His-238, and Asp-242. His-265 (proton donor) is an active-site residue.

This sequence belongs to the LpxC family. Zn(2+) serves as cofactor.

The catalysed reaction is a UDP-3-O-[(3R)-3-hydroxyacyl]-N-acetyl-alpha-D-glucosamine + H2O = a UDP-3-O-[(3R)-3-hydroxyacyl]-alpha-D-glucosamine + acetate. It functions in the pathway glycolipid biosynthesis; lipid IV(A) biosynthesis; lipid IV(A) from (3R)-3-hydroxytetradecanoyl-[acyl-carrier-protein] and UDP-N-acetyl-alpha-D-glucosamine: step 2/6. Its function is as follows. Catalyzes the hydrolysis of UDP-3-O-myristoyl-N-acetylglucosamine to form UDP-3-O-myristoylglucosamine and acetate, the committed step in lipid A biosynthesis. In Klebsiella pneumoniae (strain 342), this protein is UDP-3-O-acyl-N-acetylglucosamine deacetylase.